The following is a 179-amino-acid chain: MAELATIARPYAEALFRVAEGGDISAWSTLVQELAQVAQLPEVLSVASSPKVSRTQVAELLLAALKSPLASGAQAKNFVQMLVDNHRIALLPEIAEQFEALKNAREGAADVQIVSAFPLEGAQLAELVTSLERKFKRKLKPAVEVDSSLIGGVRVTVGDEVLDTSVRARLAGMQAALTA.

Belongs to the ATPase delta chain family. F-type ATPases have 2 components, F(1) - the catalytic core - and F(0) - the membrane proton channel. F(1) has five subunits: alpha(3), beta(3), gamma(1), delta(1), epsilon(1). F(0) has three main subunits: a(1), b(2) and c(10-14). The alpha and beta chains form an alternating ring which encloses part of the gamma chain. F(1) is attached to F(0) by a central stalk formed by the gamma and epsilon chains, while a peripheral stalk is formed by the delta and b chains.

It localises to the cell inner membrane. F(1)F(0) ATP synthase produces ATP from ADP in the presence of a proton or sodium gradient. F-type ATPases consist of two structural domains, F(1) containing the extramembraneous catalytic core and F(0) containing the membrane proton channel, linked together by a central stalk and a peripheral stalk. During catalysis, ATP synthesis in the catalytic domain of F(1) is coupled via a rotary mechanism of the central stalk subunits to proton translocation. In terms of biological role, this protein is part of the stalk that links CF(0) to CF(1). It either transmits conformational changes from CF(0) to CF(1) or is implicated in proton conduction. The protein is ATP synthase subunit delta of Burkholderia pseudomallei (strain 1710b).